Here is a 476-residue protein sequence, read N- to C-terminus: RuvB-like helicase 2 (476 aa).

Position 72–80 (72–80) interacts with ATP; sequence VGPPSTGKT.

Belongs to the RuvB family. As to quaternary structure, may form heterododecamers with RVB1. Component of the SWR1 chromatin remodeling complex, the INO80 chromatin remodeling complex, and of the R2TP complex.

It is found in the nucleus. The enzyme catalyses ATP + H2O = ADP + phosphate + H(+). In terms of biological role, DNA helicase which participates in several chromatin remodeling complexes, including the SWR1 and the INO80 complexes. The SWR1 complex mediates the ATP-dependent exchange of histone H2A for the H2A variant HZT1 leading to transcriptional regulation of selected genes by chromatin remodeling. The INO80 complex remodels chromatin by shifting nucleosomes and is involved in DNA repair. Also involved in pre-rRNA processing. This is RuvB-like helicase 2 (RVB2) from Mycosarcoma maydis (Corn smut fungus).